A 486-amino-acid chain; its full sequence is UDP-N-acetylmuramate--L-alanine ligase (486 aa).

132–138 (GTHGKTT) contacts ATP.

This sequence belongs to the MurCDEF family.

It localises to the cytoplasm. It catalyses the reaction UDP-N-acetyl-alpha-D-muramate + L-alanine + ATP = UDP-N-acetyl-alpha-D-muramoyl-L-alanine + ADP + phosphate + H(+). Its pathway is cell wall biogenesis; peptidoglycan biosynthesis. Functionally, cell wall formation. The polypeptide is UDP-N-acetylmuramate--L-alanine ligase (Halorhodospira halophila (strain DSM 244 / SL1) (Ectothiorhodospira halophila (strain DSM 244 / SL1))).